Reading from the N-terminus, the 491-residue chain is Glutamyl-tRNA(Gln) amidotransferase subunit A (491 aa).

Catalysis depends on charge relay system residues Lys-76 and Ser-154. The active-site Acyl-ester intermediate is Ser-178.

The protein belongs to the amidase family. GatA subfamily. In terms of assembly, heterotrimer of A, B and C subunits.

It catalyses the reaction L-glutamyl-tRNA(Gln) + L-glutamine + ATP + H2O = L-glutaminyl-tRNA(Gln) + L-glutamate + ADP + phosphate + H(+). Its function is as follows. Allows the formation of correctly charged Gln-tRNA(Gln) through the transamidation of misacylated Glu-tRNA(Gln) in organisms which lack glutaminyl-tRNA synthetase. The reaction takes place in the presence of glutamine and ATP through an activated gamma-phospho-Glu-tRNA(Gln). This chain is Glutamyl-tRNA(Gln) amidotransferase subunit A, found in Cereibacter sphaeroides (strain KD131 / KCTC 12085) (Rhodobacter sphaeroides).